Here is a 346-residue protein sequence, read N- to C-terminus: MKLRSFIGSRVIKTGIAVLLTAYICEWIGWSPVFAVITAIVTIEPTVSDSIRKGLIRFPASAIGAAYAVLFIALFGNSPVTYALSAVFTITTCFRLKLHDGLLVATITSVAMVDVIHSNYVMEFFIRLFTTTIGLSVSTLVNMFLLPPDYQKNIQTKVSSIAQELGKQIQGIYYCLLHVDEINNESKYLDKLLELDKLIIRAEILSRYQTNDSKYHFTENNQEKFKDIKTQLHFLRIMHYHLTNVIDHPKEQINIDEKEKNELLNVSSYIAQVLKKELAYNSDDIQDKRTRLNELFWKEKHRTHNLSSDMLNKLPFELVMLYELISILELTEDYFYTANLHKENAN.

The next 4 helical transmembrane spans lie at 16-36, 55-75, 102-122, and 128-148; these read IAVLLTAYICEWIGWSPVFAV, LIRFPASAIGAAYAVLFIALF, LLVATITSVAMVDVIHSNYVM, and LFTTTIGLSVSTLVNMFLLPP.

It belongs to the UPF0421 family.

The protein localises to the cell membrane. This chain is UPF0421 protein OB2406, found in Oceanobacillus iheyensis (strain DSM 14371 / CIP 107618 / JCM 11309 / KCTC 3954 / HTE831).